The sequence spans 273 residues: Flagellin FljO (273 aa).

This sequence belongs to the bacterial flagellin family. In C.crescentus, the flagellar filament is composed of multiple flagellins of 29 kDa; 27 kDa and 25 kDa.

It localises to the secreted. The protein localises to the bacterial flagellum. In terms of biological role, flagellin is the subunit protein which polymerizes to form the filaments of bacterial flagella. In Caulobacter vibrioides (strain ATCC 19089 / CIP 103742 / CB 15) (Caulobacter crescentus), this protein is Flagellin FljO (fljO).